We begin with the raw amino-acid sequence, 121 residues long: Large ribosomal subunit protein uL14c (121 aa).

This sequence belongs to the universal ribosomal protein uL14 family. As to quaternary structure, part of the 50S ribosomal subunit.

It localises to the plastid. It is found in the chloroplast. In terms of biological role, binds to 23S rRNA. The polypeptide is Large ribosomal subunit protein uL14c (Emiliania huxleyi (Coccolithophore)).